Here is a 199-residue protein sequence, read N- to C-terminus: Recombination protein RecR (199 aa).

The C4-type zinc-finger motif lies at 56 to 71 (CRSCFNVAQSELCRIC). The Toprim domain maps to 79–174 (SSICVVEEPK…KVTRLASGLP (96 aa)).

It belongs to the RecR family.

Its function is as follows. May play a role in DNA repair. It seems to be involved in an RecBC-independent recombinational process of DNA repair. It may act with RecF and RecO. The sequence is that of Recombination protein RecR from Frankia casuarinae (strain DSM 45818 / CECT 9043 / HFP020203 / CcI3).